The primary structure comprises 337 residues: tRNA-dihydrouridine synthase B (337 aa).

FMN-binding positions include 19 to 21 (PMA) and glutamine 73. Cysteine 103 serves as the catalytic Proton donor. FMN contacts are provided by residues lysine 142, 203–205 (NGD), and 227–228 (GR).

It belongs to the Dus family. DusB subfamily. Requires FMN as cofactor.

It carries out the reaction a 5,6-dihydrouridine in tRNA + NAD(+) = a uridine in tRNA + NADH + H(+). The enzyme catalyses a 5,6-dihydrouridine in tRNA + NADP(+) = a uridine in tRNA + NADPH + H(+). Its function is as follows. Catalyzes the synthesis of 5,6-dihydrouridine (D), a modified base found in the D-loop of most tRNAs, via the reduction of the C5-C6 double bond in target uridines. The sequence is that of tRNA-dihydrouridine synthase B from Pseudomonas syringae pv. tomato (strain ATCC BAA-871 / DC3000).